We begin with the raw amino-acid sequence, 457 residues long: UDP-glucosyltransferase 45 (457 aa).

His21 functions as the Proton acceptor in the catalytic mechanism. Position 21 (His21) interacts with an anthocyanidin. Residue Asp112 is the Charge relay of the active site. UDP-alpha-D-glucose is bound by residues Thr134, Gln336, His351, Trp354, Asn355, Ser356, Glu359, Asp375, and Gln376.

This sequence belongs to the UDP-glycosyltransferase family.

It carries out the reaction (20S)-protopanaxadiol + UDP-alpha-D-glucose = (20S)-ginsenoside Rh2 + UDP + H(+). The protein operates within secondary metabolite biosynthesis; terpenoid biosynthesis. In terms of biological role, component of the triterpene saponins (e.g. PPD-type ginsenosides) biosynthetic pathway. Glycosyltransferase that catalyzes the biosynthesis of ginsenoside Rh2 from protopanaxadiol (PPD). This is UDP-glucosyltransferase 45 from Panax ginseng (Korean ginseng).